Consider the following 200-residue polypeptide: dITP/XTP pyrophosphatase (200 aa).

Position 7–12 (7–12 (TSNKHK)) interacts with substrate. Mg(2+) is bound by residues glutamate 38 and aspartate 73. The active-site Proton acceptor is the aspartate 73. Residues serine 74, 154–157 (FGYD), lysine 177, and 182–183 (HR) contribute to the substrate site.

This sequence belongs to the HAM1 NTPase family. Homodimer. The cofactor is Mg(2+).

The catalysed reaction is XTP + H2O = XMP + diphosphate + H(+). It catalyses the reaction dITP + H2O = dIMP + diphosphate + H(+). It carries out the reaction ITP + H2O = IMP + diphosphate + H(+). Functionally, pyrophosphatase that catalyzes the hydrolysis of nucleoside triphosphates to their monophosphate derivatives, with a high preference for the non-canonical purine nucleotides XTP (xanthosine triphosphate), dITP (deoxyinosine triphosphate) and ITP. Seems to function as a house-cleaning enzyme that removes non-canonical purine nucleotides from the nucleotide pool, thus preventing their incorporation into DNA/RNA and avoiding chromosomal lesions. The polypeptide is dITP/XTP pyrophosphatase (Campylobacter jejuni subsp. doylei (strain ATCC BAA-1458 / RM4099 / 269.97)).